A 285-amino-acid chain; its full sequence is uncharacterized protein (285 aa).

The Guanylate cyclase domain maps to 92–199 (TLLLADVEES…PTINRTARLR (108 aa)).

The protein belongs to the adenylyl cyclase class-4/guanylyl cyclase family.

This is an uncharacterized protein from Mycobacterium tuberculosis (strain ATCC 25618 / H37Rv).